The following is a 161-amino-acid chain: UPF0178 protein BSUIS_A1819 (161 aa).

Belongs to the UPF0178 family.

The sequence is that of UPF0178 protein BSUIS_A1819 from Brucella suis (strain ATCC 23445 / NCTC 10510).